Reading from the N-terminus, the 154-residue chain is Small ribosomal subunit protein uS15 (154 aa).

Residues 1 to 23 form a disordered region; the sequence is MNKKRDKGQSHSTRPARAGPPRW.

This sequence belongs to the universal ribosomal protein uS15 family. Part of the 30S ribosomal subunit.

This Staphylothermus marinus (strain ATCC 43588 / DSM 3639 / JCM 9404 / F1) protein is Small ribosomal subunit protein uS15.